The primary structure comprises 130 residues: Small ribosomal subunit protein eS6 (130 aa).

Belongs to the eukaryotic ribosomal protein eS6 family.

This Methanosphaera stadtmanae (strain ATCC 43021 / DSM 3091 / JCM 11832 / MCB-3) protein is Small ribosomal subunit protein eS6.